We begin with the raw amino-acid sequence, 505 residues long: Protein disulfide-isomerase (505 aa).

The signal sequence occupies residues 1–20 (MHKAQKFALGLLAAAAVATA). Thioredoxin domains follow at residues 21–128 (SDVV…QSLP) and 335–465 (FVAG…ENGK). Catalysis depends on nucleophile residues C50, C53, C385, and C388. 2 disulfide bridges follow: C50–C53 and C385–C388. The interval 470 to 505 (ISEDAEETSSATETTTETATKSEEAAKETATEHDEL) is disordered. Residues 477–488 (TSSATETTTETA) show a composition bias toward low complexity. The segment covering 489–505 (TKSEEAAKETATEHDEL) has biased composition (basic and acidic residues). A Prevents secretion from ER motif is present at residues 502 to 505 (HDEL).

The protein belongs to the protein disulfide isomerase family.

The protein localises to the endoplasmic reticulum lumen. It catalyses the reaction Catalyzes the rearrangement of -S-S- bonds in proteins.. In terms of biological role, participates in the folding of proteins containing disulfide bonds, may be involved in glycosylation, prolyl hydroxylation and triglyceride transfer. The protein is Protein disulfide-isomerase of Humicola insolens (Soft-rot fungus).